The following is a 390-amino-acid chain: Trehalose-phosphate phosphatase (390 aa).

Aspartate 150 (nucleophile) is an active-site residue. Residues aspartate 150, aspartate 152, and aspartate 333 each contribute to the Mg(2+) site. 150-152 lines the substrate pocket; that stretch reads DFD.

Belongs to the trehalose phosphatase family. Requires Mg(2+) as cofactor.

It catalyses the reaction alpha,alpha-trehalose 6-phosphate + H2O = alpha,alpha-trehalose + phosphate. It functions in the pathway glycan biosynthesis; trehalose biosynthesis. In terms of biological role, removes the phosphate from trehalose 6-phosphate to produce free trehalose. The sequence is that of Trehalose-phosphate phosphatase (otsB) from Mycobacterium ulcerans (strain Agy99).